The primary structure comprises 110 residues: Integration host factor subunit alpha (110 aa).

The protein belongs to the bacterial histone-like protein family. Heterodimer of an alpha and a beta chain.

Functionally, this protein is one of the two subunits of integration host factor, a specific DNA-binding protein that functions in genetic recombination as well as in transcriptional and translational control. The sequence is that of Integration host factor subunit alpha from Delftia acidovorans (strain DSM 14801 / SPH-1).